We begin with the raw amino-acid sequence, 83 residues long: Cytotoxin homolog 5V (83 aa).

A signal peptide spans 1-21 (MKTLLLTLVVVTIVCLDLGYT). 4 disulfides stabilise this stretch: Cys-24–Cys-43, Cys-36–Cys-61, Cys-65–Cys-76, and Cys-77–Cys-82.

This sequence belongs to the three-finger toxin family. Short-chain subfamily. Orphan group XV sub-subfamily. As to expression, expressed by the venom gland.

It localises to the secreted. The protein localises to the target cell membrane. Has low cytotoxic activity. This is Cytotoxin homolog 5V from Naja atra (Chinese cobra).